Consider the following 548-residue polypeptide: Membrane protein insertase YidC (548 aa).

The helical transmembrane segment at 6-26 (NLLVIALLFVSFMIWQAWEQD) threads the bilayer. Residues 28–56 (NPQPQTQQTTQTTTTAAGSAADQGVPASG) are disordered. A compositionally biased stretch (low complexity) spans 29 to 42 (PQPQTQQTTQTTTT). Transmembrane regions (helical) follow at residues 350 to 370 (FVGN…GIMY), 424 to 444 (FPLI…MGSI), 458 to 478 (LSAQ…MFFI), and 499 to 519 (PVIF…YYIV).

This sequence belongs to the OXA1/ALB3/YidC family. Type 1 subfamily. As to quaternary structure, interacts with the Sec translocase complex via SecD. Specifically interacts with transmembrane segments of nascent integral membrane proteins during membrane integration.

The protein resides in the cell inner membrane. In terms of biological role, required for the insertion and/or proper folding and/or complex formation of integral membrane proteins into the membrane. Involved in integration of membrane proteins that insert both dependently and independently of the Sec translocase complex, as well as at least some lipoproteins. Aids folding of multispanning membrane proteins. The chain is Membrane protein insertase YidC from Salmonella agona (strain SL483).